The following is a 131-amino-acid chain: Large ribosomal subunit protein bL12 (131 aa).

This sequence belongs to the bacterial ribosomal protein bL12 family. As to quaternary structure, homodimer. Part of the ribosomal stalk of the 50S ribosomal subunit. Forms a multimeric L10(L12)X complex, where L10 forms an elongated spine to which 2 to 4 L12 dimers bind in a sequential fashion. Binds GTP-bound translation factors.

Forms part of the ribosomal stalk which helps the ribosome interact with GTP-bound translation factors. Is thus essential for accurate translation. In Prochlorococcus marinus (strain MIT 9515), this protein is Large ribosomal subunit protein bL12.